A 409-amino-acid polypeptide reads, in one-letter code: Argininosuccinate synthase (409 aa).

ATP contacts are provided by residues 8-16 and A34; that span reads AYSGGLDTS. Y85 contributes to the L-citrulline binding site. Residue G115 coordinates ATP. T117, N121, and D122 together coordinate L-aspartate. Position 121 (N121) interacts with L-citrulline. Positions 125, 178, 187, 268, and 280 each coordinate L-citrulline.

The protein belongs to the argininosuccinate synthase family. Type 1 subfamily. In terms of assembly, homotetramer.

It is found in the cytoplasm. It carries out the reaction L-citrulline + L-aspartate + ATP = 2-(N(omega)-L-arginino)succinate + AMP + diphosphate + H(+). It participates in amino-acid biosynthesis; L-arginine biosynthesis; L-arginine from L-ornithine and carbamoyl phosphate: step 2/3. In Thermotoga sp. (strain RQ2), this protein is Argininosuccinate synthase.